The chain runs to 243 residues: UPF0246 protein SUB1767 (243 aa).

Belongs to the UPF0246 family.

The chain is UPF0246 protein SUB1767 from Streptococcus uberis (strain ATCC BAA-854 / 0140J).